We begin with the raw amino-acid sequence, 378 residues long: Probable pectin lyase A (378 aa).

Positions 1–19 (MKFPAFITAIISIASLSSA) are cleaved as a signal peptide. Intrachain disulfides connect Cys-82–Cys-101 and Cys-91–Cys-225. The active site involves Arg-255. The cysteines at positions 321 and 329 are disulfide-linked.

The protein belongs to the polysaccharide lyase 1 family.

The protein localises to the secreted. It catalyses the reaction Eliminative cleavage of (1-&gt;4)-alpha-D-galacturonan methyl ester to give oligosaccharides with 4-deoxy-6-O-methyl-alpha-D-galact-4-enuronosyl groups at their non-reducing ends.. Pectinolytic enzymes consist of four classes of enzymes: pectin lyase, polygalacturonase, pectin methylesterase and rhamnogalacturonase. Among pectinolytic enzymes, pectin lyase is the most important in depolymerization of pectin, since it cleaves internal glycosidic bonds of highly methylated pectins. This Aspergillus terreus (strain NIH 2624 / FGSC A1156) protein is Probable pectin lyase A (pelA).